Reading from the N-terminus, the 791-residue chain is Splicing factor 3A subunit 1 (791 aa).

The disordered stretch occupies residues 1 to 41; that stretch reads MQAGPVQAVPPPPPVATESKQPIEEEASSKEDPTPSKPVVG. Lys20 participates in a covalent cross-link: Glycyl lysine isopeptide (Lys-Gly) (interchain with G-Cter in SUMO2). Positions 21-34 are enriched in basic and acidic residues; sequence QPIEEEASSKEDPT. The SURP motif 1 repeat unit spans residues 52-94; the sequence is IVDKTASFVARNGPEFEARIRQNEINNPKFNFLNPNDPYHAYY. An N6-acetyllysine modification is found at Lys55. Lys131 participates in a covalent cross-link: Glycyl lysine isopeptide (Lys-Gly) (interchain with G-Cter in SUMO2). The SURP motif 2 repeat unit spans residues 166–208; it reads VVKLTAQFVARNGRQFLTQLMQKEQRNYQFDFLRPQHSLFNYF. Positions 318–411 are disordered; sequence GESEEVEMEV…APAPDEYLVS (94 aa). Phosphoserine occurs at positions 320 and 329. Over residues 320 to 336 the composition is skewed to acidic residues; the sequence is SEEVEMEVESDEEDQEK. Residues 340–351 show a composition bias toward polar residues; it reads TPSQLDQDTQVQ. The span at 352 to 362 shows a compositional bias: acidic residues; it reads DMDEGSDDEEE. Phosphoserine is present on Ser357. Pro residues predominate over residues 366-382; sequence VPPPPETPMPPPLPPTP. Residues 386–395 show a composition bias toward basic and acidic residues; it reads IVRKDYDPKA. Ser411 is subject to Phosphoserine. Lys422 is covalently cross-linked (Glycyl lysine isopeptide (Lys-Gly) (interchain with G-Cter in SUMO2)). A Phosphoserine modification is found at Ser449. Residue Tyr454 is modified to Phosphotyrosine. The span at 486 to 500 shows a compositional bias: basic and acidic residues; the sequence is IGEEEIQKPEEKVTW. 3 disordered regions span residues 486–516, 528–582, and 664–684; these read IGEE…AAQA, HKAK…AMPP, and PMPP…KKLK. Lys497 is covalently cross-linked (Glycyl lysine isopeptide (Lys-Gly) (interchain with G-Cter in SUMO2)). A Phosphoserine modification is found at Ser506. The segment covering 507 to 516 has biased composition (polar residues); sequence MARTQQAAQA. Residue Lys540 forms a Glycyl lysine isopeptide (Lys-Gly) (interchain with G-Cter in SUMO2) linkage. A compositionally biased stretch (polar residues) spans 561–570; it reads ATNIPSSAPP. The span at 664–673 shows a compositional bias: pro residues; it reads PMPPVHPPPP. The segment at 678–700 is required and sufficient for nuclear import; the sequence is PPSKKLKTEDSLMPEEEFLRRNK. Lys684 is covalently cross-linked (Glycyl lysine isopeptide (Lys-Gly) (interchain with G-Cter in SUMO2)). Residues 705 to 788 enclose the Ubiquitin-like domain; it reads IKVQVPNMQD…IHLALKERGG (84 aa). Tyr757 carries the phosphotyrosine modification.

Component of the 17S U2 SnRNP complex, a ribonucleoprotein complex that contains small nuclear RNA (snRNA) U2 and a number of specific proteins. Part of the SF3A subcomplex of the 17S U2 SnRNP complex which is composed of three subunits; SF3A3/SAP61, SF3A2/SAP62 and SF3A1/SAP114. SF3A associates with the splicing factor SF3B and a 12S RNA unit to form the mature 17S U2 small nuclear ribonucleoprotein complex (17S U2 snRNP). SF3A1 functions as a scaffold that interacts directly with both SF3A2 and SF3A3. Identified in the spliceosome 'E' complex, a precursor of the spliceosome 'A' complex. Identified in the spliceosome 'A' and 'B' complexes. Identified in the spliceosome 'C' complex. Interacts with P2RX6; resulting in a reduction of the splicing activity.

It localises to the nucleus. It is found in the nucleus speckle. Functionally, component of the 17S U2 SnRNP complex of the spliceosome, a large ribonucleoprotein complex that removes introns from transcribed pre-mRNAs. The 17S U2 SnRNP complex (1) directly participates in early spliceosome assembly and (2) mediates recognition of the intron branch site during pre-mRNA splicing by promoting the selection of the pre-mRNA branch-site adenosine, the nucleophile for the first step of splicing. Within the 17S U2 SnRNP complex, SF3A1 is part of the SF3A subcomplex that contributes to the assembly of the 17S U2 snRNP, and the subsequent assembly of the pre-spliceosome 'E' complex and the pre-catalytic spliceosome 'A' complex. Involved in pre-mRNA splicing as a component of pre-catalytic spliceosome 'B' complexes. The polypeptide is Splicing factor 3A subunit 1 (Sf3a1) (Mus musculus (Mouse)).